We begin with the raw amino-acid sequence, 221 residues long: Octanoyltransferase (221 aa).

One can recognise a BPL/LPL catalytic domain in the interval G38–G220. Residues R84–H91, A149–G151, and G163–A165 each bind substrate. The active-site Acyl-thioester intermediate is the C181.

The protein belongs to the LipB family.

The protein resides in the cytoplasm. It carries out the reaction octanoyl-[ACP] + L-lysyl-[protein] = N(6)-octanoyl-L-lysyl-[protein] + holo-[ACP] + H(+). Its pathway is protein modification; protein lipoylation via endogenous pathway; protein N(6)-(lipoyl)lysine from octanoyl-[acyl-carrier-protein]: step 1/2. Catalyzes the transfer of endogenously produced octanoic acid from octanoyl-acyl-carrier-protein onto the lipoyl domains of lipoate-dependent enzymes. Lipoyl-ACP can also act as a substrate although octanoyl-ACP is likely to be the physiological substrate. The sequence is that of Octanoyltransferase from Rubrobacter xylanophilus (strain DSM 9941 / JCM 11954 / NBRC 16129 / PRD-1).